The sequence spans 142 residues: HTH-type transcriptional repressor NsrR (142 aa).

The HTH rrf2-type domain maps to 2 to 129; sequence QLTSFTDYGL…DRHTLAELVE (128 aa). The segment at residues 28–51 is a DNA-binding region (H-T-H motif); it reads ITEVTQVYGVSRNHMVKIINQLSH. [2Fe-2S] cluster contacts are provided by cysteine 91, cysteine 96, and cysteine 102.

[2Fe-2S] cluster serves as cofactor.

Its function is as follows. Nitric oxide-sensitive repressor of genes involved in protecting the cell against nitrosative stress. May require iron for activity. The chain is HTH-type transcriptional repressor NsrR from Proteus mirabilis (strain HI4320).